We begin with the raw amino-acid sequence, 445 residues long: Ribosomal protein uS12 methylthiotransferase RimO (445 aa).

The MTTase N-terminal domain maps to 4-119; the sequence is IKVALVSLGC…LLESIKVFLK (116 aa). The [4Fe-4S] cluster site is built by C13, C48, C82, C156, C160, and C163. The Radical SAM core domain maps to 142-372; the sequence is TTPTYTAYVR…MILQQSISKD (231 aa). The TRAM domain occupies 375-441; it reads KEKIGKIYEV…EYDLIGVVYN (67 aa).

It belongs to the methylthiotransferase family. RimO subfamily. The cofactor is [4Fe-4S] cluster.

The protein localises to the cytoplasm. The catalysed reaction is L-aspartate(89)-[ribosomal protein uS12]-hydrogen + (sulfur carrier)-SH + AH2 + 2 S-adenosyl-L-methionine = 3-methylsulfanyl-L-aspartate(89)-[ribosomal protein uS12]-hydrogen + (sulfur carrier)-H + 5'-deoxyadenosine + L-methionine + A + S-adenosyl-L-homocysteine + 2 H(+). Its function is as follows. Catalyzes the methylthiolation of an aspartic acid residue of ribosomal protein uS12. In Clostridium botulinum (strain Langeland / NCTC 10281 / Type F), this protein is Ribosomal protein uS12 methylthiotransferase RimO.